The following is a 128-amino-acid chain: Sulfurtransferase TusD (128 aa).

Residue Cys78 is the Cysteine persulfide intermediate of the active site.

The protein belongs to the DsrE/TusD family. As to quaternary structure, heterohexamer, formed by a dimer of trimers. The hexameric TusBCD complex contains 2 copies each of TusB, TusC and TusD. The TusBCD complex interacts with TusE.

The protein localises to the cytoplasm. Functionally, part of a sulfur-relay system required for 2-thiolation of 5-methylaminomethyl-2-thiouridine (mnm(5)s(2)U) at tRNA wobble positions. Accepts sulfur from TusA and transfers it in turn to TusE. In Buchnera aphidicola subsp. Acyrthosiphon pisum (strain 5A), this protein is Sulfurtransferase TusD.